The following is a 350-amino-acid chain: Major allergen Mal f 1 (350 aa).

Positions 1-22 are cleaved as a signal peptide; that stretch reads MRYSTVLAALALLGTSAVSVLA.

The protein localises to the secreted. It localises to the cell wall. This Malassezia furfur (Pityriasis versicolor infection agent) protein is Major allergen Mal f 1.